The sequence spans 652 residues: Inactive leucine-rich repeat receptor-like serine/threonine-protein kinase At1g60630 (652 aa).

The N-terminal stretch at 1–23 is a signal peptide; the sequence is MISSSSCMFFLVFAFFLISPVRS. Residues 24 to 256 are Extracellular-facing; sequence SDVEALLSLK…SRTKLIGIIS (233 aa). LRR repeat units follow at residues 64-84, 85-108, 109-132, 134-156, 158-178, and 179-203; these read SKLV…SLNQ, LDQL…LSGL, VNLK…LTSL, RLKT…LLRL, RLYT…PLNQ, and ATLR…ALNR. Residues N72, N104, and N120 are each glycosylated (N-linked (GlcNAc...) asparagine). N-linked (GlcNAc...) asparagine glycans are attached at residues N185, N205, and N225. Residues 257–277 form a helical membrane-spanning segment; sequence GSICGGILILLLTFLLICLLW. The Cytoplasmic segment spans residues 278–652; it reads RRKRSKSKRE…SLPREDHMSI (375 aa). Positions 286–321 are disordered; the sequence is REERRSKRVAESKEAKTAETEEGTSDQKNKRFSWEK. In terms of domain architecture, Protein kinase spans 350–624; sequence KASAETLGRG…VKDARAEAAL (275 aa). S352 is subject to Phosphoserine. Residues 356-364 and K378 each bind ATP; that span reads LGRGTLGST. Phosphoserine occurs at positions 430 and 433. A Phosphothreonine modification is found at T509. The interval 630 to 652 is disordered; that stretch reads SDHSPGRWSDTIQSLPREDHMSI.

Belongs to the protein kinase superfamily. Ser/Thr protein kinase family.

It is found in the cell membrane. In Arabidopsis thaliana (Mouse-ear cress), this protein is Inactive leucine-rich repeat receptor-like serine/threonine-protein kinase At1g60630.